The primary structure comprises 109 residues: Nucleoid-associated protein BCB4264_A0025 (109 aa).

It belongs to the YbaB/EbfC family. As to quaternary structure, homodimer.

It localises to the cytoplasm. The protein resides in the nucleoid. In terms of biological role, binds to DNA and alters its conformation. May be involved in regulation of gene expression, nucleoid organization and DNA protection. This chain is Nucleoid-associated protein BCB4264_A0025, found in Bacillus cereus (strain B4264).